A 716-amino-acid polypeptide reads, in one-letter code: Inhibitor of nuclear factor kappa-B kinase subunit epsilon (716 aa).

In terms of domain architecture, Protein kinase spans 9–315 (WHTDDLLGQG…LQRVVVHVFS (307 aa)). 15-23 (LGQGATASV) provides a ligand contact to ATP. K30 participates in a covalent cross-link: Glycyl lysine isopeptide (Lys-Gly) (interchain with G-Cter in ubiquitin). K38 serves as a coordination point for ATP. D135 functions as the Proton acceptor in the catalytic mechanism. S172 carries the post-translational modification Phosphoserine; by autocatalysis and IKKB. K231 is covalently cross-linked (Glycyl lysine isopeptide (Lys-Gly) (interchain with G-Cter in SUMO1)). The interaction with DDX3X stretch occupies residues 383–647 (STAIPKGLAF…VQESLSKLLE (265 aa)). Residue K401 forms a Glycyl lysine isopeptide (Lys-Gly) (interchain with G-Cter in ubiquitin) linkage. The interval 436–457 (QELMFRGLHWVMEVLQATCRRT) is leucine-zipper. Position 501 is a phosphothreonine (T501). Position 664 is a phosphoserine (S664).

Belongs to the protein kinase superfamily. Ser/Thr protein kinase family. I-kappa-B kinase subfamily. Homodimer. Interacts with MAVS/IPS1. Interacts (via protein kinase domain) with TTLL12 (via N-terminus); the interaction prevents MAVS binding to IKBKE. Interacts with the adapter proteins AZI2/NAP1, TANK and TBKBP1/SINTBAD. Interacts with SIKE1. Interacts with TICAM1/TRIF, IRF3 and RIGI; interactions are disrupted by the interaction between IKBKE and SIKE1. Interacts with TOPORS; induced by DNA damage. Interacts with CYLD. Interacts (when polyubiquitinated) with IKBKB, IKBKG and MYD88. Interacts with IFIH1. Interacts with DDX3X; the interaction may be induced upon virus infection. Interacts with TRIM6 (via SPRY box). Interacts with unanchored K48-linked polyubiquitin chains; this leads to IKBKE activation. Interacts with TBK1. Interacts with FKBP5. As to quaternary structure, (Microbial infection) Interacts (via Protein kinase domain) with arenavirus protein N; the interaction inhibits IKBKE kinase function. In terms of assembly, (Microbial infection) Interacts with Ebola virus protein VP35; the interaction leads to inhibition of cellular antiviral response by blocking necessary interactions between the IKBKE and MAVS/IPS as well as its substrates IRF3 and IRF7. (Microbial infection) Interacts with Severe fever with thrombocytopenia virus (SFTSV) NSs; this interaction this interaction sequesters IKBKE in NSs-induced cytoplasmic inclusion bodies thereby inhibiting the IFN responses. As to quaternary structure, (Microbial infection) Interacts with human T-cell leukemia virus 1/HTLV-1 protein HBZ. In terms of assembly, (Microbial infection) Interacts with Epstein-Barr virus (EBV) protein NEC2/BFRF1; this interaction inhibits IKBKE kinase activity and IRF3 nuclear translocation. In terms of processing, autophosphorylated and phosphorylated by IKBKB/IKKB. Phosphorylation at Ser-172 is enhanced by the interaction with DDX3X. Phosphorylated at Thr-501 upon IFN activation. Sumoylation by TOPORS upon DNA damage is required for protection of cells against DNA damage-induced cell death. Desumoylated by SENP1. Post-translationally, 'Lys-63'-linked polyubiquitinated at Lys-30 and Lys-401 by TRAF2:BIRC2 and TRAF2:BIRC3 complexes. Ubiquitination is induced by LPS, TNFA and interleukin-1 and required for full kinase activity and KF-kappa-B pathway activation. In terms of tissue distribution, highly expressed in spleen followed by thymus, peripheral blood leukocytes, pancreas, placenta. Weakly expressed in lung, kidney, prostate, ovary and colon.

Its subcellular location is the cytoplasm. It localises to the nucleus. The protein localises to the PML body. The enzyme catalyses L-seryl-[I-kappa-B protein] + ATP = O-phospho-L-seryl-[I-kappa-B protein] + ADP + H(+). Functionally, serine/threonine kinase that plays an essential role in regulating inflammatory responses to viral infection, through the activation of the type I IFN, NF-kappa-B and STAT signaling. Also involved in TNFA and inflammatory cytokines, like Interleukin-1, signaling. Following activation of viral RNA sensors, such as RIG-I-like receptors, associates with DDX3X and phosphorylates interferon regulatory factors (IRFs), IRF3 and IRF7, as well as DDX3X. This activity allows subsequent homodimerization and nuclear translocation of the IRF3 leading to transcriptional activation of pro-inflammatory and antiviral genes including IFNB. In order to establish such an antiviral state, IKBKE forms several different complexes whose composition depends on the type of cell and cellular stimuli. Thus, several scaffolding molecules including IPS1/MAVS, TANK, AZI2/NAP1 or TBKBP1/SINTBAD can be recruited to the IKBKE-containing-complexes. Activated by polyubiquitination in response to TNFA and interleukin-1, regulates the NF-kappa-B signaling pathway through, at least, the phosphorylation of CYLD. Phosphorylates inhibitors of NF-kappa-B thus leading to the dissociation of the inhibitor/NF-kappa-B complex and ultimately the degradation of the inhibitor. In addition, is also required for the induction of a subset of ISGs which displays antiviral activity, may be through the phosphorylation of STAT1 at 'Ser-708'. Phosphorylation of STAT1 at 'Ser-708' also seems to promote the assembly and DNA binding of ISGF3 (STAT1:STAT2:IRF9) complexes compared to GAF (STAT1:STAT1) complexes, in this way regulating the balance between type I and type II IFN responses. Protects cells against DNA damage-induced cell death. Also plays an important role in energy balance regulation by sustaining a state of chronic, low-grade inflammation in obesity, wich leads to a negative impact on insulin sensitivity. Phosphorylates AKT1. The chain is Inhibitor of nuclear factor kappa-B kinase subunit epsilon (IKBKE) from Homo sapiens (Human).